Consider the following 268-residue polypeptide: Taurine import ATP-binding protein TauB (268 aa).

One can recognise an ABC transporter domain in the interval 4–236; sequence LAIRNISMRF…EGVDADLREV (233 aa). Position 41 to 48 (41 to 48) interacts with ATP; sequence GPSGCGKT.

Belongs to the ABC transporter superfamily. Taurine importer (TC 3.A.1.17.1) family. The complex is composed of two ATP-binding proteins (TauB), two transmembrane proteins (TauC) and a solute-binding protein (TauA).

It localises to the cell inner membrane. It carries out the reaction taurine(out) + ATP + H2O = taurine(in) + ADP + phosphate + H(+). Part of the ABC transporter complex TauABC involved in taurine import. Responsible for energy coupling to the transport system. The protein is Taurine import ATP-binding protein TauB of Jannaschia sp. (strain CCS1).